The sequence spans 491 residues: Nucleoside transporter 1.1 (491 aa).

6 helical membrane passes run 27-47 (FYVY…VNAV), 82-102 (YNLI…LSWF), 109-129 (VRLL…MVVP), 136-156 (AGAV…KSIF), 173-193 (STMM…QIIV), and 209-229 (KIYY…LILL). The span at 260–273 (CHTDEHPTHDKEGR) shows a compositional bias: basic and acidic residues. Disordered stretches follow at residues 260–280 (CHTD…SGKE) and 290–309 (AAAK…PHEV). A glycan (N-linked (GlcNAc...) asparagine) is linked at Asn-274. A run of 5 helical transmembrane segments spans residues 333–353 (MFVA…GIAV), 361–381 (WFST…RFSP), 395–415 (WIIV…LLHS), 427–447 (VMEV…LVLG), and 460–480 (FVAG…GTVL).

This sequence belongs to the SLC29A/ENT transporter (TC 2.A.57) family.

Its subcellular location is the membrane. The enzyme catalyses adenosine(in) + H(+)(in) = adenosine(out) + H(+)(out). The catalysed reaction is uridine(in) + H(+)(in) = uridine(out) + H(+)(out). Its function is as follows. Sodium-independent high affinity nucleoside:H(+) symporter; transports adenosine and uridine. Can transport cytidine and thymidine. This is Nucleoside transporter 1.1 from Leishmania donovani.